The sequence spans 429 residues: Histidine--tRNA ligase (429 aa).

It belongs to the class-II aminoacyl-tRNA synthetase family. In terms of assembly, homodimer.

It localises to the cytoplasm. The enzyme catalyses tRNA(His) + L-histidine + ATP = L-histidyl-tRNA(His) + AMP + diphosphate + H(+). This Pseudomonas putida (strain GB-1) protein is Histidine--tRNA ligase.